The primary structure comprises 246 residues: uncharacterized protein (246 aa).

A coiled-coil region spans residues threonine 204 to glycine 243.

This is an uncharacterized protein from Aquifex aeolicus (strain VF5).